The primary structure comprises 1322 residues: Flocculation protein FLO9 (1322 aa).

Residues 1–24 form the signal peptide; the sequence is MSLAHYCLLLAIVTLLGLTNVVSA. The 176-residue stretch at 74-249 folds into the PA14 domain; sequence GGQTDISIDY…GTTVSDDFEG (176 aa). N-linked (GlcNAc...) asparagine glycosylation is found at Asn-135, Asn-187, Asn-203, Asn-257, Asn-262, and Asn-270. Positions 197–240 are sugar recognition; it reads NGSPPDNITGTVYMYAGFYYPMKIVYSNAVAWGTLPISVTLPDG. Repeat copies occupy residues 278 to 322, 323 to 367, 368 to 412, 413 to 457, 458 to 502, 503 to 547, 548 to 592, 593 to 637, 638 to 682, 683 to 727, 728 to 772, 773 to 817, and 818 to 862. The tract at residues 278 to 862 is 13 X 45 AA approximate tandem repeats, Thr-rich; the sequence is TTTEPWTGTF…KTPTTAISSS (585 aa). Residue Asn-329 is glycosylated (N-linked (GlcNAc...) asparagine). Asn-419, Asn-464, Asn-509, Asn-554, Asn-599, Asn-644, Asn-689, and Asn-734 each carry an N-linked (GlcNAc...) asparagine glycan. Disordered stretches follow at residues 770 to 799 and 816 to 843; these read LISTTTEPWTGTFTSTSTEMTTVTGTNGQP and VTTTTEPWTGTFTSTSTEMTTITGTNGQ. Low complexity-rich tracts occupy residues 773–795 and 817–840; these read TTTEPWTGTFTSTSTEMTTVTGT and TTTTEPWTGTFTSTSTEMTTITGT. Residue Asn-888 is glycosylated (N-linked (GlcNAc...) asparagine). Repeat copies occupy residues 892-906, 907-921, and 922-936. The tract at residues 892-936 is 3 X 15 AA approximate repeats, Ser-rich; that stretch reads VISSSVISSSDTSSLVISSSVTSSLVTSSPVISSSFISSPVISST. Residues 950–1001 are compositionally biased toward low complexity; sequence SVIPTSSSTSGSSESETGSASSASSSSSISSESPKSTYSSSSLPPVTSATTS. The disordered stretch occupies residues 950–1018; it reads SVIPTSSSTS…PPVTTTKTSE (69 aa). Polar residues predominate over residues 1002 to 1018; that stretch reads QEITSSLPPVTTTKTSE. 3 consecutive repeat copies span residues 1013 to 1063, 1085 to 1135, and 1136 to 1186. Positions 1013-1186 are 3 X 51 AA approximate repeats, Thr-rich; it reads TTKTSEQTTL…TVYSTWRPQT (174 aa). Positions 1186–1196 are enriched in polar residues; sequence TTNEQSVSSKM. Disordered stretches follow at residues 1186–1221 and 1256–1284; these read TTNEQSVSSKMNSATSETTTNTGAAETTTSTGAAET and SETGNTKSLTSSGLSTMSQQPRSTPASSM. Over residues 1197–1221 the composition is skewed to low complexity; sequence NSATSETTTNTGAAETTTSTGAAET. Residues 1257–1284 are compositionally biased toward polar residues; the sequence is ETGNTKSLTSSGLSTMSQQPRSTPASSM. Gly-1299 carries GPI-anchor amidated glycine lipidation. The propeptide at 1300 to 1322 is removed in mature form; the sequence is SANSLLAGSGLSVFIASLLLAII.

It belongs to the flocculin family. Post-translationally, the GPI-anchor is attached to the protein in the endoplasmic reticulum and serves to target the protein to the cell surface. There, the glucosamine-inositol phospholipid moiety is cleaved off and the GPI-modified mannoprotein is covalently attached via its lipidless GPI glycan remnant to the 1,6-beta-glucan of the outer cell wall layer.

It is found in the secreted. It localises to the cell wall. Its subcellular location is the membrane. Functionally, cell wall protein that participates directly in adhesive cell-cell interactions during yeast flocculation, a reversible, asexual and Ca(2+)-dependent process in which cells adhere to form aggregates (flocs) consisting of thousands of cells. The lectin-like protein sticks out of the cell wall of flocculent cells and selectively binds mannose residues in the cell walls of adjacent cells. This Saccharomyces cerevisiae (strain ATCC 204508 / S288c) (Baker's yeast) protein is Flocculation protein FLO9 (FLO9).